The primary structure comprises 467 residues: Ribosomal RNA small subunit methyltransferase F (467 aa).

Residues 119 to 125 (ASAPGSK), Glu-143, Asp-170, and Asp-188 contribute to the S-adenosyl-L-methionine site. Cys-241 functions as the Nucleophile in the catalytic mechanism.

The protein belongs to the class I-like SAM-binding methyltransferase superfamily. RsmB/NOP family.

Its subcellular location is the cytoplasm. The catalysed reaction is cytidine(1407) in 16S rRNA + S-adenosyl-L-methionine = 5-methylcytidine(1407) in 16S rRNA + S-adenosyl-L-homocysteine + H(+). Specifically methylates the cytosine at position 1407 (m5C1407) of 16S rRNA. In Shewanella amazonensis (strain ATCC BAA-1098 / SB2B), this protein is Ribosomal RNA small subunit methyltransferase F.